The sequence spans 678 residues: Elongation factor G 2 (678 aa).

Residues 4–278 (QKLRNIGIIA…AVVDYLPSPQ (275 aa)) enclose the tr-type G domain. GTP-binding positions include 13–20 (AHVDAGKT), 77–81 (DTPGH), and 131–134 (NKMD).

It belongs to the TRAFAC class translation factor GTPase superfamily. Classic translation factor GTPase family. EF-G/EF-2 subfamily.

Its subcellular location is the cytoplasm. Catalyzes the GTP-dependent ribosomal translocation step during translation elongation. During this step, the ribosome changes from the pre-translocational (PRE) to the post-translocational (POST) state as the newly formed A-site-bound peptidyl-tRNA and P-site-bound deacylated tRNA move to the P and E sites, respectively. Catalyzes the coordinated movement of the two tRNA molecules, the mRNA and conformational changes in the ribosome. In Hahella chejuensis (strain KCTC 2396), this protein is Elongation factor G 2.